We begin with the raw amino-acid sequence, 449 residues long: Exodeoxyribonuclease 7 large subunit (449 aa).

It belongs to the XseA family. In terms of assembly, heterooligomer composed of large and small subunits.

The protein resides in the cytoplasm. The catalysed reaction is Exonucleolytic cleavage in either 5'- to 3'- or 3'- to 5'-direction to yield nucleoside 5'-phosphates.. Its function is as follows. Bidirectionally degrades single-stranded DNA into large acid-insoluble oligonucleotides, which are then degraded further into small acid-soluble oligonucleotides. This chain is Exodeoxyribonuclease 7 large subunit, found in Lacticaseibacillus casei (strain BL23) (Lactobacillus casei).